The chain runs to 98 residues: NADH-ubiquinone oxidoreductase chain 4L (98 aa).

3 helical membrane-spanning segments follow: residues 2–22 (TPIF…TLIF), 29–49 (SLLC…LIIL), and 61–81 (ILLL…LVMV).

This sequence belongs to the complex I subunit 4L family. Core subunit of respiratory chain NADH dehydrogenase (Complex I) which is composed of 45 different subunits.

The protein resides in the mitochondrion inner membrane. The catalysed reaction is a ubiquinone + NADH + 5 H(+)(in) = a ubiquinol + NAD(+) + 4 H(+)(out). Core subunit of the mitochondrial membrane respiratory chain NADH dehydrogenase (Complex I) which catalyzes electron transfer from NADH through the respiratory chain, using ubiquinone as an electron acceptor. Part of the enzyme membrane arm which is embedded in the lipid bilayer and involved in proton translocation. This is NADH-ubiquinone oxidoreductase chain 4L (MT-ND4L) from Avahi cleesei (Cleese's woolly lemur).